Consider the following 308-residue polypeptide: MSNYEALLKFNRKAVSKEMVQYLASTTASIIKIKKTNSMIDIALPAPPLTKFINRLIKHSNVQTPTLMATSVYLAKLRSIIPSNVYGIETTRHRIFLGCLILAAKTLNDSSPLNKHWAEYTDGLLILREVNTIERELLEYFDWDVTISTDDLITCLSPFLKPIKEEQLYKSQRDCRTLKNFSAQEKDIVNKTSISHSRSSSNMSIPSLASTSTLSTLESRRSNLSNYSNRIRTLPELHESNNISDKFSPRTYNIDSKHDNKENRPIPTIKPFNFSKARPVILKTGLNKQIIKEDTKVKKSNWSNYFKS.

The Cyclin N-terminal domain maps to Glu18–Thr146. The tract at residues Ser248–Lys270 is disordered. A compositionally biased stretch (basic and acidic residues) spans Asp255–Arg264.

Belongs to the cyclin family. PCL1,2 subfamily. Forms a cyclin-CDK complex with PHO85. Interacts with RVS167.

It is found in the cytoplasm. Its subcellular location is the nucleus. Functionally, G1/S-specific cyclin partner of the cyclin-dependent kinase (CDK) PHO85. Essential for the control of the cell cycle at the G1/S (start) transition. Together with cyclin PCL1, positively controls degradation of sphingoid long chain base kinase LCB4. The PCL2-PHO85 cyclin-CDK holoenzyme phosphorylates LCB4, which is required for its ubiquitination and degradation. PCL2-PHO85 also phosphorylates RVS167, linking cyclin-CDK activity with organization of the actin cytoskeleton. This is PHO85 cyclin-2 (PCL2) from Saccharomyces cerevisiae (strain ATCC 204508 / S288c) (Baker's yeast).